The primary structure comprises 294 residues: Nucleotide-binding protein CLL_A3342 (294 aa).

8–15 is a binding site for ATP; the sequence is GLSGAGKT. 59-62 is a GTP binding site; that stretch reads DIRG.

The protein belongs to the RapZ-like family.

Functionally, displays ATPase and GTPase activities. This Clostridium botulinum (strain Eklund 17B / Type B) protein is Nucleotide-binding protein CLL_A3342.